We begin with the raw amino-acid sequence, 96 residues long: Co-chaperonin GroES (96 aa).

The protein belongs to the GroES chaperonin family. In terms of assembly, heptamer of 7 subunits arranged in a ring. Interacts with the chaperonin GroEL.

It is found in the cytoplasm. Its function is as follows. Together with the chaperonin GroEL, plays an essential role in assisting protein folding. The GroEL-GroES system forms a nano-cage that allows encapsulation of the non-native substrate proteins and provides a physical environment optimized to promote and accelerate protein folding. GroES binds to the apical surface of the GroEL ring, thereby capping the opening of the GroEL channel. In Haemophilus influenzae (strain 86-028NP), this protein is Co-chaperonin GroES.